Here is a 50-residue protein sequence, read N- to C-terminus: Small ribosomal subunit protein eS31 (50 aa).

4 residues coordinate Zn(2+): cysteine 22, cysteine 25, cysteine 40, and cysteine 43. The segment at 22 to 43 (CPRCGPGVFMADHGDRWACGKC) adopts a C4-type zinc-finger fold.

Belongs to the eukaryotic ribosomal protein eS31 family. As to quaternary structure, part of the 30S ribosomal subunit. It depends on Zn(2+) as a cofactor.

The chain is Small ribosomal subunit protein eS31 from Pyrococcus horikoshii (strain ATCC 700860 / DSM 12428 / JCM 9974 / NBRC 100139 / OT-3).